The sequence spans 375 residues: Xylose transport system permease protein XylH (375 aa).

Helical transmembrane passes span 9–29 (LQVYIMLIAIAVIMAFFSVAT), 52–72 (LAIGMVFVIISAEIDLSVGSL), 85–105 (VWWGFPLPVTIIATIALGLIF), 118–138 (VPSFIVTLAGYLAFRGILIGL), 159–179 (LSDIAGVILGGIAVIGFVLWG), 199–219 (DFTKYALFAVIVLGAIYLLND), 220–240 (YRGIPFPVLVLAVLAILGLFL), 271–291 (KLIIFAMNGVLVAIAGLILSA), 319–339 (LAGGVGSVFGVVIGALIIASL), and 348–368 (VPTFWQYIVKGGILLLAVWID).

Belongs to the binding-protein-dependent transport system permease family. AraH/RbsC subfamily.

Its subcellular location is the cell inner membrane. Part of the binding-protein-dependent transport system for D-xylose. Probably responsible for the translocation of the substrate across the membrane. In Haemophilus influenzae (strain ATCC 51907 / DSM 11121 / KW20 / Rd), this protein is Xylose transport system permease protein XylH (xylH).